Consider the following 432-residue polypeptide: GTPase Obg (432 aa).

The Obg domain occupies 1–158; it reads MFVDQIKIEV…RKLKLELKVL (158 aa). An OBG-type G domain is found at 159–335; that stretch reads ADVGLVGFPS…LTHRTADVLE (177 aa). Residues 165–172, 190–194, 212–215, 282–285, and 316–318 contribute to the GTP site; these read GFPSVGKS, FTTLV, DLPG, SKMD, and SSL. Positions 172 and 192 each coordinate Mg(2+). An OCT domain is found at 354–432; that stretch reads TFKEDEPAFK…IEDFTFEFVE (79 aa).

Belongs to the TRAFAC class OBG-HflX-like GTPase superfamily. OBG GTPase family. Monomer. Requires Mg(2+) as cofactor.

It is found in the cytoplasm. An essential GTPase which binds GTP, GDP and possibly (p)ppGpp with moderate affinity, with high nucleotide exchange rates and a fairly low GTP hydrolysis rate. Plays a role in control of the cell cycle, stress response, ribosome biogenesis and in those bacteria that undergo differentiation, in morphogenesis control. The protein is GTPase Obg of Ligilactobacillus salivarius (strain UCC118) (Lactobacillus salivarius).